Reading from the N-terminus, the 652-residue chain is Acetyl-coenzyme A synthetase (652 aa).

Residues 189 to 192 (RGGK) and Thr311 contribute to the CoA site. ATP-binding positions include 387-389 (GEP), 411-416 (DTWWQT), Asp500, and Arg515. Residue Ser523 coordinates CoA. Residue Arg526 participates in ATP binding. Mg(2+) is bound by residues Val537, His539, and Val542. Arg584 contributes to the CoA binding site. Lys609 bears the N6-acetyllysine mark.

It belongs to the ATP-dependent AMP-binding enzyme family. Mg(2+) is required as a cofactor. In terms of processing, acetylated. Deacetylation by the SIR2-homolog deacetylase activates the enzyme.

The enzyme catalyses acetate + ATP + CoA = acetyl-CoA + AMP + diphosphate. Functionally, catalyzes the conversion of acetate into acetyl-CoA (AcCoA), an essential intermediate at the junction of anabolic and catabolic pathways. AcsA undergoes a two-step reaction. In the first half reaction, AcsA combines acetate with ATP to form acetyl-adenylate (AcAMP) intermediate. In the second half reaction, it can then transfer the acetyl group from AcAMP to the sulfhydryl group of CoA, forming the product AcCoA. The sequence is that of Acetyl-coenzyme A synthetase from Rhizobium rhizogenes (Agrobacterium rhizogenes).